Reading from the N-terminus, the 165-residue chain is NADH-quinone oxidoreductase subunit I (165 aa).

4Fe-4S ferredoxin-type domains lie at 66-98 (HRLTKNEKGDLKCVACDMCATACPANCIFITAT) and 109-138 (SKFTIDLLECVFCGLCVEACPKDAIRMDTG). 8 residues coordinate [4Fe-4S] cluster: cysteine 78, cysteine 81, cysteine 84, cysteine 88, cysteine 118, cysteine 121, cysteine 124, and cysteine 128.

It belongs to the complex I 23 kDa subunit family. As to quaternary structure, NDH-1 is composed of 14 different subunits. Subunits NuoA, H, J, K, L, M, N constitute the membrane sector of the complex. [4Fe-4S] cluster serves as cofactor.

The protein resides in the cell inner membrane. It carries out the reaction a quinone + NADH + 5 H(+)(in) = a quinol + NAD(+) + 4 H(+)(out). Functionally, NDH-1 shuttles electrons from NADH, via FMN and iron-sulfur (Fe-S) centers, to quinones in the respiratory chain. The immediate electron acceptor for the enzyme in this species is believed to be ubiquinone. Couples the redox reaction to proton translocation (for every two electrons transferred, four hydrogen ions are translocated across the cytoplasmic membrane), and thus conserves the redox energy in a proton gradient. The chain is NADH-quinone oxidoreductase subunit I from Campylobacter fetus subsp. fetus (strain 82-40).